The primary structure comprises 199 residues: Recombination protein RecR (199 aa).

Residues 56–71 form a C4-type zinc finger; the sequence is CQQCNNYTEQTLCALC. The 96-residue stretch at 79–174 folds into the Toprim domain; it reads TLLCVVESPA…NISQLAHGIP (96 aa).

The protein belongs to the RecR family.

May play a role in DNA repair. It seems to be involved in an RecBC-independent recombinational process of DNA repair. It may act with RecF and RecO. The sequence is that of Recombination protein RecR from Legionella pneumophila subsp. pneumophila (strain Philadelphia 1 / ATCC 33152 / DSM 7513).